Reading from the N-terminus, the 97-residue chain is MKIVRGALAGTLESSDLLVRISPKEDGLELVLNSEVIHQFGPHIEKVARDCLARLGITEALVVIEDKGALDCVVAARVQTAISRAVDEWNPDWSALS.

Ser-14 is modified (O-(phosphoribosyl dephospho-coenzyme A)serine).

This sequence belongs to the CitD family. In terms of assembly, oligomer with a subunit composition of (alpha,beta,gamma)6.

It localises to the cytoplasm. Its function is as follows. Covalent carrier of the coenzyme of citrate lyase. The polypeptide is Citrate lyase acyl carrier protein (Rhodopseudomonas palustris (strain BisA53)).